We begin with the raw amino-acid sequence, 149 residues long: MQVVLLQDVVKLGKKGDIVNVSEGYARNFLYPKNLAAPATESKLKELKTQKQTQAAKKQKEEAEAKALAAKINGLTVALKVKVGDAGRLFGAISNKDIADGLKSQHGYSIDKKKIVLKEPIKNLGTYKITLKIHPVAQADINVEVASMD.

It belongs to the bacterial ribosomal protein bL9 family.

Binds to the 23S rRNA. The chain is Large ribosomal subunit protein bL9 from Desulforamulus reducens (strain ATCC BAA-1160 / DSM 100696 / MI-1) (Desulfotomaculum reducens).